Reading from the N-terminus, the 740-residue chain is NAD(P)H-quinone oxidoreductase subunit 5, chloroplastic (740 aa).

Transmembrane regions (helical) follow at residues 9–29, 40–60, 89–109, 125–145, 147–167, 185–205, 219–239, 258–278, 286–306, 327–347, 354–374, 396–416, 425–445, 543–563, 602–622, and 717–737; these read WIIP…LFLF, WAFQ…YLSI, IDPL…MVLI, FAYM…SNLI, IYIF…FWFT, GDFG…SFEF, NEVD…GAVA, TPIS…FLVA, VIPY…LLGA, LGYM…FHLI, ALLF…VGYS, ITFL…CFWS, WLYS…TAFY, LFPI…GIPF, VLSV…YKPI, and SYLF…YLLF.

The protein belongs to the complex I subunit 5 family. In terms of assembly, NDH is composed of at least 16 different subunits, 5 of which are encoded in the nucleus.

It is found in the plastid. It localises to the chloroplast thylakoid membrane. It carries out the reaction a plastoquinone + NADH + (n+1) H(+)(in) = a plastoquinol + NAD(+) + n H(+)(out). It catalyses the reaction a plastoquinone + NADPH + (n+1) H(+)(in) = a plastoquinol + NADP(+) + n H(+)(out). In terms of biological role, NDH shuttles electrons from NAD(P)H:plastoquinone, via FMN and iron-sulfur (Fe-S) centers, to quinones in the photosynthetic chain and possibly in a chloroplast respiratory chain. The immediate electron acceptor for the enzyme in this species is believed to be plastoquinone. Couples the redox reaction to proton translocation, and thus conserves the redox energy in a proton gradient. In Nicotiana sylvestris (Wood tobacco), this protein is NAD(P)H-quinone oxidoreductase subunit 5, chloroplastic (ndhF).